The following is a 441-amino-acid chain: Apolipoprotein N-acyltransferase (441 aa).

7 helical membrane passes run 23 to 43 (IIFK…SIYL), 45 to 65 (FFEN…GLVL), 75 to 95 (YFWI…LSSI), 97 to 117 (FNLN…YGLL), 133 to 153 (GIFC…WGIF), 156 to 176 (YGFF…AYFI), and 178 to 198 (EGYI…FSGF). A CN hydrolase domain is found at 215-441 (INTNISQDQK…LSKEIFNDKK (227 aa)). Glu-256 serves as the catalytic Proton acceptor. Residue Lys-310 is part of the active site. Residue Cys-359 is the Nucleophile of the active site.

This sequence belongs to the CN hydrolase family. Apolipoprotein N-acyltransferase subfamily.

The protein localises to the cell inner membrane. The enzyme catalyses N-terminal S-1,2-diacyl-sn-glyceryl-L-cysteinyl-[lipoprotein] + a glycerophospholipid = N-acyl-S-1,2-diacyl-sn-glyceryl-L-cysteinyl-[lipoprotein] + a 2-acyl-sn-glycero-3-phospholipid + H(+). It participates in protein modification; lipoprotein biosynthesis (N-acyl transfer). In terms of biological role, catalyzes the phospholipid dependent N-acylation of the N-terminal cysteine of apolipoprotein, the last step in lipoprotein maturation. This chain is Apolipoprotein N-acyltransferase, found in Campylobacter jejuni subsp. jejuni serotype O:2 (strain ATCC 700819 / NCTC 11168).